A 390-amino-acid chain; its full sequence is Adherens junction-associated protein 1 (390 aa).

The N-terminal stretch at 1-37 is a signal peptide; sequence MWITQLLGIRSGPPLGSHAWILIAIFQLAMDFIICES. The Extracellular portion of the chain corresponds to 38–262; sequence ESPGKAYKHL…NDTSGLAVHQ (225 aa). The interval 218–253 is disordered; the sequence is LQNPGIHNGKKSPGRISTTDPNPGNGKTARPPRIPN. A helical membrane pass occupies residues 263-283; that stretch reads IITITVSLIMVIAALITTLVL. Positions 283–390 are targeting signals; the sequence is LKNCCAQSGN…VSEKWFEISC (108 aa). Topologically, residues 284 to 390 are cytoplasmic; the sequence is KNCCAQSGNA…VSEKWFEISC (107 aa).

Its subcellular location is the basolateral cell membrane. It is found in the apical cell membrane. It localises to the cell junction. The protein localises to the adherens junction. In terms of biological role, may play a role in cell adhesion and cell migration. This is Adherens junction-associated protein 1 (ajap1) from Xenopus tropicalis (Western clawed frog).